The following is a 446-amino-acid chain: ATP synthase subunit b-delta (446 aa).

The interval 1–168 (MSTFIGQLVG…PAAADVQYPL (168 aa)) is ATP synthase subunit b. Residues 4–24 (FIGQLVGFAAIVFLVVRYVVP) traverse the membrane as a helical segment. An ATP synthase subunit delta region spans residues 169–446 (MTKMRSSSRV…LAAAEAQLPD (278 aa)).

The protein in the N-terminal section; belongs to the ATPase B chain family. It in the C-terminal section; belongs to the ATPase delta chain family. As to quaternary structure, F-type ATPases have 2 components, F(1) - the catalytic core - and F(0) - the membrane proton channel. F(1) has five subunits: alpha(3), beta(3), gamma(1), delta(1), epsilon(1). F(0) has three main subunits: a(1), b(2) and c(10-14). The alpha and beta chains form an alternating ring which encloses part of the gamma chain. F(1) is attached to F(0) by a central stalk formed by the gamma and epsilon chains, while a peripheral stalk is formed by the delta and b chains.

Its subcellular location is the cell membrane. F(1)F(0) ATP synthase produces ATP from ADP in the presence of a proton or sodium gradient. F-type ATPases consist of two structural domains, F(1) containing the extramembraneous catalytic core and F(0) containing the membrane proton channel, linked together by a central stalk and a peripheral stalk. During catalysis, ATP synthesis in the catalytic domain of F(1) is coupled via a rotary mechanism of the central stalk subunits to proton translocation. Functionally, this fusion protein includes a component of the F(0) channel (subunit b) and of the F(1) subunit (subunit delta). Two copies of subunit b and one of delta together form the peripheral 'stator' stalk which links F(1) to F(0). The protein is ATP synthase subunit b-delta (atpFH) of Mycobacterium avium (strain 104).